Here is an 85-residue protein sequence, read N- to C-terminus: ATP synthase subunit c (85 aa).

Transmembrane regions (helical) follow at residues 10–30 (IAVG…FAIL) and 53–73 (FIIA…ALLF).

It belongs to the ATPase C chain family. F-type ATPases have 2 components, F(1) - the catalytic core - and F(0) - the membrane proton channel. F(1) has five subunits: alpha(3), beta(3), gamma(1), delta(1), epsilon(1). F(0) has three main subunits: a(1), b(2) and c(10-14). The alpha and beta chains form an alternating ring which encloses part of the gamma chain. F(1) is attached to F(0) by a central stalk formed by the gamma and epsilon chains, while a peripheral stalk is formed by the delta and b chains.

The protein localises to the cell inner membrane. In terms of biological role, f(1)F(0) ATP synthase produces ATP from ADP in the presence of a proton or sodium gradient. F-type ATPases consist of two structural domains, F(1) containing the extramembraneous catalytic core and F(0) containing the membrane proton channel, linked together by a central stalk and a peripheral stalk. During catalysis, ATP synthesis in the catalytic domain of F(1) is coupled via a rotary mechanism of the central stalk subunits to proton translocation. Its function is as follows. Key component of the F(0) channel; it plays a direct role in translocation across the membrane. A homomeric c-ring of between 10-14 subunits forms the central stalk rotor element with the F(1) delta and epsilon subunits. The protein is ATP synthase subunit c of Aliivibrio salmonicida (strain LFI1238) (Vibrio salmonicida (strain LFI1238)).